The primary structure comprises 366 residues: MSFNTFGRVFTFTTWGESHGPALGATVDGCPPGVALDEGWIQQFLDRRRPGSSKFTTQRQEPDRVRILSGVFEGRTTGTPIQLMIENTDQRSKDYGEIAQAFRPGHADIAYHLKYGIRDYRGGGRSSARETAARVAAGGVAQAVLRDLVPGLKIAGYMVQMGDLHLDRANFDLAEIGNNPFFLPDAGAVPAWEDYLNAIRKAQDSVGAAVEVLIQGCPPGLGAPVYAKLDTDLAAAMMSINAVKGVEIGEGMAAAALTGTANADEIRMGNEGPRFLSNHAGGILGGISTGQDIVVRFAVKPTSSILTPRRTINRKGEEIELITKGRHDPCVGIRAVPIAEAMAACVVLDHLLLDRAQTGGRRGTIG.

An NADP(+)-binding site is contributed by Arg-48. FMN is bound by residues Arg-125–Ser-127, Asn-241–Ala-242, Gly-285, Lys-300–Ser-304, and Arg-326.

It belongs to the chorismate synthase family. In terms of assembly, homotetramer. Requires FMNH2 as cofactor.

The enzyme catalyses 5-O-(1-carboxyvinyl)-3-phosphoshikimate = chorismate + phosphate. It participates in metabolic intermediate biosynthesis; chorismate biosynthesis; chorismate from D-erythrose 4-phosphate and phosphoenolpyruvate: step 7/7. Catalyzes the anti-1,4-elimination of the C-3 phosphate and the C-6 proR hydrogen from 5-enolpyruvylshikimate-3-phosphate (EPSP) to yield chorismate, which is the branch point compound that serves as the starting substrate for the three terminal pathways of aromatic amino acid biosynthesis. This reaction introduces a second double bond into the aromatic ring system. In Paracoccus denitrificans (strain Pd 1222), this protein is Chorismate synthase.